Here is a 422-residue protein sequence, read N- to C-terminus: ORC1-type DNA replication protein 13 (422 aa).

Residues threonine 80 to leucine 84, tyrosine 231, and arginine 243 each bind ATP.

Belongs to the CDC6/cdc18 family.

Functionally, involved in regulation of DNA replication. This chain is ORC1-type DNA replication protein 13 (cdc6m), found in Haloarcula marismortui (strain ATCC 43049 / DSM 3752 / JCM 8966 / VKM B-1809) (Halobacterium marismortui).